Here is a 78-residue protein sequence, read N- to C-terminus: uncharacterized protein (78 aa).

An N-terminal signal peptide occupies residues 1–27 (MQNSKTDMCAALWAVTGLVLNVAVRFA).

This is an uncharacterized protein from Dryophytes versicolor (chameleon treefrog).